The following is a 378-amino-acid chain: Atypical chemokine receptor 2 (378 aa).

Residues 1–49 (MPTVASPLPLTTVGSENSSSIYDYDYLDDMTILVCRKDEVLSFGRVFLP) are Extracellular-facing. Residue Asn17 is glycosylated (N-linked (GlcNAc...) asparagine). The chain crosses the membrane as a helical span at residues 50–70 (VVYSLIFVLGLAGNLLLLVVL). At 71–91 (LHSAPRRRTMELYLLNLAVSN) the chain is on the cytoplasmic side. A helical membrane pass occupies residues 92–112 (LLFVVTMPFWAISVAWHWVFG). At 113–117 (SFLCK) the chain is on the extracellular side. Cys116 and Cys194 are joined by a disulfide. Residues 118–139 (VISTLYSINFYCGIFFITCMSL) form a helical membrane-spanning segment. Topologically, residues 140–161 (DKYLEIVHAQPLHRPKAQFRNL) are cytoplasmic. The helical transmembrane segment at 162–182 (LLIVMVWITSLAISVPEMVFV) threads the bilayer. Topologically, residues 183-216 (QIHQTLDGVWHCYADFGGHATIWKLYLRFQLNLL) are extracellular. A helical membrane pass occupies residues 217 to 237 (GFLLPLLAMIFFYSRIGCVLV). Residues 238–249 (RLRPPGQGRALR) are Cytoplasmic-facing. Residues 250-270 (MAAALVIVFFMLWFPYNLTLF) traverse the membrane as a helical segment. The Extracellular portion of the chain corresponds to 271–292 (LHSLLDLHVFGNCEISHRLDYT). The chain crosses the membrane as a helical span at residues 293–313 (LQVTESLAFSHCCFTPVLYAF). The Cytoplasmic segment spans residues 314-378 (CSHRFRRYLK…SLNKGEMGNT (65 aa)). A C-terminal cytoplasmic tail region spans residues 326-378 (LSVMLRWHQAPGTPSSNHSESSRVTAQEDVVSMNDLGERQSEDSLNKGEMGNT).

The protein belongs to the G-protein coupled receptor 1 family. Atypical chemokine receptor subfamily. In terms of processing, phosphorylated on serine residues in the C-terminal cytoplasmic tail. As to expression, expressed on apoptotic neutrophils (at protein level).

The protein localises to the early endosome. Its subcellular location is the recycling endosome. It localises to the cell membrane. Atypical chemokine receptor that controls chemokine levels and localization via high-affinity chemokine binding that is uncoupled from classic ligand-driven signal transduction cascades, resulting instead in chemokine sequestration, degradation, or transcytosis. Also known as interceptor (internalizing receptor) or chemokine-scavenging receptor or chemokine decoy receptor. Acts as a receptor for chemokines including CCL2, CCL3, CCL3L1, CCL4, CCL5, CCL7, CCL8, CCL11, CCL13, CCL17, CCL22, CCL23, CCL24, SCYA2/MCP-1, SCY3/MIP-1-alpha, SCYA5/RANTES and SCYA7/MCP-3. Upon active ligand stimulation, activates a beta-arrestin 1 (ARRB1)-dependent, G protein-independent signaling pathway that results in the phosphorylation of the actin-binding protein cofilin (CFL1) through a RAC1-PAK1-LIMK1 signaling pathway. Activation of this pathway results in up-regulation of ACKR2 from endosomal compartment to cell membrane, increasing its efficiency in chemokine uptake and degradation. By scavenging chemokines in tissues, on the surfaces of lymphatic vessels, and in placenta, plays an essential role in the resolution (termination) of the inflammatory response and in the regulation of adaptive immune responses. Plays a major role in the immune silencing of macrophages during the resolution of inflammation. Acts as a regulator of inflammatory leukocyte interactions with lymphatic endothelial cells (LECs) and is required for immature/mature dendritic cells discrimination by LECs. The protein is Atypical chemokine receptor 2 (Ackr2) of Mus musculus (Mouse).